The following is a 289-amino-acid chain: MSDSKSSASTSEDRLYGSAPSHDVPKRKTRTHHLQAMKAEGERWAMLTAYDYSSARIFEEAGIPVLLVGDSAANVVYGYETTVPVTIDELLPLVRGVVRGAPHALVVADLPFGSYESSPEQALASATRFMKEGLAHAVKLEGGERVAPQIAAITAAGIPVMAHVGFTPQSVNSLGGFRVQGRGDAAEQLVADAIAVQEAGAFSVVMEMVPAEIAGQVTRKLTIPTVGIGAGVECDAQVLVWQDMAGYTSGKTAKFVKRFGNVGDELRSAAAAYATEVRAGTFPAEEHSF.

Low complexity predominate over residues methionine 1–threonine 10. The interval methionine 1 to histidine 33 is disordered. 2 residues coordinate Mg(2+): aspartate 70 and aspartate 109. 3-methyl-2-oxobutanoate-binding positions include aspartate 70–serine 71, aspartate 109, and lysine 139. Glutamate 141 contributes to the Mg(2+) binding site. Glutamate 207 acts as the Proton acceptor in catalysis.

Belongs to the PanB family. As to quaternary structure, homodecamer; pentamer of dimers. Mg(2+) serves as cofactor.

The protein resides in the cytoplasm. It carries out the reaction 3-methyl-2-oxobutanoate + (6R)-5,10-methylene-5,6,7,8-tetrahydrofolate + H2O = 2-dehydropantoate + (6S)-5,6,7,8-tetrahydrofolate. Its pathway is cofactor biosynthesis; (R)-pantothenate biosynthesis; (R)-pantoate from 3-methyl-2-oxobutanoate: step 1/2. Its function is as follows. Catalyzes the reversible reaction in which hydroxymethyl group from 5,10-methylenetetrahydrofolate is transferred onto alpha-ketoisovalerate to form ketopantoate. The chain is 3-methyl-2-oxobutanoate hydroxymethyltransferase from Rhodococcus jostii (strain RHA1).